The primary structure comprises 513 residues: MVEEVQKHSVHTLVFRSLKRTHDMFVADNGKPVPLDEESHKRKMAIKLRNEYGPVLHMPTSKENLKEKVPQNASDSYGHKQYPANQGQEVEYLVTGTHPYPPGPGVALTADTKIQRMPSESAAQSLAVALPASQARADANRPVPAGGEYRHPGAPDRAQPAGAVVMEGSNAKNSALMAKKAPTMPKPQWHPPWKLYRVISGHLGWVRCIAVEPGNQWFVTGSADRTIKIWDLASGKLKLSLTGHISTVRGVIVSTRSPYLFSCGEDKQVKCWDLEYNKVIRHYHGHLSAVYGLDLHPTIDVLVTCSRDSTARIWDVRTKASVHTLSGHTNAVATVRCQAAEPQIITGSHDTTIRLWDLVAGKTRVTLTNHKKSVRAVVLHPRHYTFASGSPDNIKQWKFPDGSFIQNLSGHNAIINTLTVNSDGVLVSGADNGTMHLWDWRTGYNFQRVHAAVQPGSLDSESGIFACAFDQSESRLLTAEADKTIKVYKEDDTATEETHPVSWKPEIIKRKRF.

Residue Met-1 is modified to N-acetylmethionine. Ser-119 and Ser-200 each carry phosphoserine. WD repeat units lie at residues 201–240 (GHLG…LKLS), 243–282 (GHIS…VIRH), 285–324 (GHLS…SVHT), 327–366 (GHTN…TRVT), 369–409 (NHKK…QNLS), 410–448 (GHNA…NFQR), and 459–498 (DSES…TEET). Residue Ser-390 is modified to Phosphoserine.

Belongs to the WD repeat PRL1/PRL2 family. Identified in the spliceosome C complex. Component of the PRP19-CDC5L splicing complex composed of a core complex comprising a homotetramer of PRPF19, CDC5L, PLRG1 and BCAS2, and at least three less stably associated proteins CTNNBL1, CWC15 and HSPA8. Interacts (via its WD40 repeat domain) directly with CDC5L (via its C-terminal); the interaction is required for mRNA splicing but not for spliceosome assembly. Component of the minor spliceosome, which splices U12-type introns. Within this complex, interacts with CRIPT. Also interacts directly in the complex with BCAS2 and PRPF19. Interacts with USB1.

It localises to the nucleus. The protein localises to the nucleus speckle. Its function is as follows. Involved in pre-mRNA splicing as component of the spliceosome. Component of the PRP19-CDC5L complex that forms an integral part of the spliceosome and is required for activating pre-mRNA splicing. As a component of the minor spliceosome, involved in the splicing of U12-type introns in pre-mRNAs. The chain is Pleiotropic regulator 1 (PLRG1) from Bos taurus (Bovine).